Consider the following 159-residue polypeptide: C-type lectin 1 (159 aa).

Residues 1–23 form the signal peptide; that stretch reads MGRFIFISFGLLVVFFFLSGAKG. Intrachain disulfides connect cysteine 26-cysteine 37, cysteine 54-cysteine 155, cysteine 61-cysteine 157, and cysteine 130-cysteine 147. In terms of domain architecture, C-type lectin spans 33 to 156; it reads MYGLCYKIFD…CKVKNAFLCQ (124 aa). Residue asparagine 118 is glycosylated (N-linked (GlcNAc...) asparagine). A Sugar-binding motif is present at residues 119 to 121; it reads LTD. Residues aspartate 121, aspartate 127, and asparagine 143 each contribute to the Ca(2+) site.

This sequence belongs to the true venom lectin family. As to quaternary structure, homodimer; disulfide-linked. As to expression, expressed by the venom gland.

It is found in the secreted. Functionally, lectin which recognizes specific carbohydrate structures and agglutinates a variety of animal cells by binding to cell-surface glycoproteins and glycolipids. May be a calcium-dependent lectin. The chain is C-type lectin 1 from Bitis gabonica (Gaboon adder).